Reading from the N-terminus, the 205-residue chain is NADH-quinone oxidoreductase subunit C (205 aa).

This sequence belongs to the complex I 30 kDa subunit family. As to quaternary structure, NDH-1 is composed of 14 different subunits. Subunits NuoB, C, D, E, F, and G constitute the peripheral sector of the complex.

The protein localises to the cell inner membrane. The enzyme catalyses a quinone + NADH + 5 H(+)(in) = a quinol + NAD(+) + 4 H(+)(out). In terms of biological role, NDH-1 shuttles electrons from NADH, via FMN and iron-sulfur (Fe-S) centers, to quinones in the respiratory chain. The immediate electron acceptor for the enzyme in this species is believed to be ubiquinone. Couples the redox reaction to proton translocation (for every two electrons transferred, four hydrogen ions are translocated across the cytoplasmic membrane), and thus conserves the redox energy in a proton gradient. This Bartonella bacilliformis (strain ATCC 35685 / KC583 / Herrer 020/F12,63) protein is NADH-quinone oxidoreductase subunit C.